The primary structure comprises 200 residues: uncharacterized protein (200 aa).

2 stretches are compositionally biased toward low complexity: residues 1 to 13 (MTSA…AAES) and 28 to 44 (PSPA…AGPR). Disordered stretches follow at residues 1-116 (MTSA…GGPG) and 137-200 (LPRD…SSFF). Basic residues predominate over residues 88-102 (RCGRPRRRDPRRRRT). Residues 189–200 (PSSSSGLLSSFF) show a composition bias toward low complexity.

This is an uncharacterized protein from Homo sapiens (Human).